Reading from the N-terminus, the 206-residue chain is Small ribosomal subunit protein uS4 (206 aa).

Residues 96 to 156 (TRLDNVVYRM…EKSRTQARIK (61 aa)) enclose the S4 RNA-binding domain.

It belongs to the universal ribosomal protein uS4 family. In terms of assembly, part of the 30S ribosomal subunit. Contacts protein S5. The interaction surface between S4 and S5 is involved in control of translational fidelity.

One of the primary rRNA binding proteins, it binds directly to 16S rRNA where it nucleates assembly of the body of the 30S subunit. Functionally, with S5 and S12 plays an important role in translational accuracy. The polypeptide is Small ribosomal subunit protein uS4 (Shewanella amazonensis (strain ATCC BAA-1098 / SB2B)).